A 462-amino-acid chain; its full sequence is MSYYPPPSGYPGGPPAYPPPQQQQQQQQQYPSYGAPPPQYPPQNNYAPPSYPPPGQYGHPPQPGYPPHSSPYGHTPSPQPPYGHPPPQHPPHQPPHRPPPSPGYGHLPPSTPNSGPAFHGQPGIATVNNNDYVHGNHSAPPPPPSGSVAFGHGAPQGYSYQYSNCTGKRKALLIGINYFGQRGQLRGCINDVKNMSTYLNQSFNYAREDMVILTDDQQNPMSQPTKANILRAMHWLVKDARPNDSLFFHYSGHGGQTPDLDGDEDDGYDEVIYPVDFRNAGHIVDDEMHRIMVRPLPAGVRLTAIFDSCHSGSALDLPYIYSTQGVLKEPNLAKEAGQGLLGVVSAYARGDMGSMVSTAMGFIKKATRGEETYQRAKQTKTSPADVIMWSGSKDVQTSADATINGQATGALSWAFITALKKNPQQSYVQLLNSIRDELASKYSQKPQLSCSHPLDTNLLYVM.

Residues 1–21 show a composition bias toward pro residues; that stretch reads MSYYPPPSGYPGGPPAYPPPQ. Residues 1 to 150 are disordered; it reads MSYYPPPSGY…PPPPSGSVAF (150 aa). Over residues 22 to 33 the composition is skewed to low complexity; sequence QQQQQQQQYPSY. 2 stretches are compositionally biased toward pro residues: residues 49 to 69 and 77 to 102; these read PSYPPPGQYGHPPQPGYPPHS and SPQPPYGHPPPQHPPHQPPHRPPPSP. Residues His-253 and Cys-309 contribute to the active site.

Belongs to the peptidase C14B family.

Functionally, involved in cell death (apoptosis). The chain is Metacaspase-1 (MCA1) from Coccidioides immitis (strain RS) (Valley fever fungus).